A 692-amino-acid polypeptide reads, in one-letter code: Elongation factor G (692 aa).

The tr-type G domain occupies 8–283 (EDYRNFGIMA…AVVDYLPSPL (276 aa)). Residues 17-24 (AHIDAGKT), 81-85 (DTPGH), and 135-138 (NKMD) contribute to the GTP site.

This sequence belongs to the TRAFAC class translation factor GTPase superfamily. Classic translation factor GTPase family. EF-G/EF-2 subfamily.

It is found in the cytoplasm. In terms of biological role, catalyzes the GTP-dependent ribosomal translocation step during translation elongation. During this step, the ribosome changes from the pre-translocational (PRE) to the post-translocational (POST) state as the newly formed A-site-bound peptidyl-tRNA and P-site-bound deacylated tRNA move to the P and E sites, respectively. Catalyzes the coordinated movement of the two tRNA molecules, the mRNA and conformational changes in the ribosome. The sequence is that of Elongation factor G from Caulobacter sp. (strain K31).